A 247-amino-acid chain; its full sequence is tRNA pseudouridine synthase A (247 aa).

Residue Asp-53 is the Nucleophile of the active site. Tyr-111 provides a ligand contact to substrate.

This sequence belongs to the tRNA pseudouridine synthase TruA family. Homodimer.

It catalyses the reaction uridine(38/39/40) in tRNA = pseudouridine(38/39/40) in tRNA. Its function is as follows. Formation of pseudouridine at positions 38, 39 and 40 in the anticodon stem and loop of transfer RNAs. In Bacillus licheniformis (strain ATCC 14580 / DSM 13 / JCM 2505 / CCUG 7422 / NBRC 12200 / NCIMB 9375 / NCTC 10341 / NRRL NRS-1264 / Gibson 46), this protein is tRNA pseudouridine synthase A.